The sequence spans 360 residues: Photosystem II protein D1 2 (360 aa).

3 helical membrane passes run 29-46 (YVGW…TATT), 118-133 (HFLI…EWEL), and 142-156 (WICV…AATA). Histidine 118 serves as a coordination point for chlorophyll a. A pheophytin a-binding site is contributed by tyrosine 126. [CaMn4O5] cluster-binding residues include aspartate 170 and glutamate 189. Residues 197 to 218 (FHMLGVAGVFGGSLFSAMHGSL) traverse the membrane as a helical segment. Histidine 198 is a binding site for chlorophyll a. A quinone contacts are provided by residues histidine 215 and 264–265 (SF). Histidine 215 contacts Fe cation. A Fe cation-binding site is contributed by histidine 272. A helical transmembrane segment spans residues 274-288 (FLGAWPVVGIWFTAL). [CaMn4O5] cluster is bound by residues histidine 332, glutamate 333, aspartate 342, and alanine 344. Residues 345–360 (AGEQAPVALQAPAING) constitute a propeptide that is removed on maturation.

It belongs to the reaction center PufL/M/PsbA/D family. In terms of assembly, PSII is composed of 1 copy each of membrane proteins PsbA, PsbB, PsbC, PsbD, PsbE, PsbF, PsbH, PsbI, PsbJ, PsbK, PsbL, PsbM, PsbT, PsbX, PsbY, PsbZ, Psb30/Ycf12, peripheral proteins PsbO, CyanoQ (PsbQ), PsbU, PsbV and a large number of cofactors. It forms dimeric complexes. It depends on The D1/D2 heterodimer binds P680, chlorophylls that are the primary electron donor of PSII, and subsequent electron acceptors. It shares a non-heme iron and each subunit binds pheophytin, quinone, additional chlorophylls, carotenoids and lipids. D1 provides most of the ligands for the Mn4-Ca-O5 cluster of the oxygen-evolving complex (OEC). There is also a Cl(-1) ion associated with D1 and D2, which is required for oxygen evolution. The PSII complex binds additional chlorophylls, carotenoids and specific lipids. as a cofactor. In terms of processing, tyr-161 forms a radical intermediate that is referred to as redox-active TyrZ, YZ or Y-Z. Post-translationally, C-terminally processed by CtpA; processing is essential to allow assembly of the oxygen-evolving complex and thus photosynthetic growth.

Its subcellular location is the cellular thylakoid membrane. The catalysed reaction is 2 a plastoquinone + 4 hnu + 2 H2O = 2 a plastoquinol + O2. Functionally, photosystem II (PSII) is a light-driven water:plastoquinone oxidoreductase that uses light energy to abstract electrons from H(2)O, generating O(2) and a proton gradient subsequently used for ATP formation. It consists of a core antenna complex that captures photons, and an electron transfer chain that converts photonic excitation into a charge separation. The D1/D2 (PsbA/PsbD) reaction center heterodimer binds P680, the primary electron donor of PSII as well as several subsequent electron acceptors. The sequence is that of Photosystem II protein D1 2 from Picosynechococcus sp. (strain ATCC 27264 / PCC 7002 / PR-6) (Agmenellum quadruplicatum).